The following is a 429-amino-acid chain: UDP-N-acetylglucosamine 1-carboxyvinyltransferase (429 aa).

22 to 23 (KN) contributes to the phosphoenolpyruvate binding site. Arg102 is a binding site for UDP-N-acetyl-alpha-D-glucosamine. Cys126 serves as the catalytic Proton donor. Cys126 is modified (2-(S-cysteinyl)pyruvic acid O-phosphothioketal). Residues 131–135 (RPVDL), Asp316, and Ile338 contribute to the UDP-N-acetyl-alpha-D-glucosamine site.

It belongs to the EPSP synthase family. MurA subfamily.

It is found in the cytoplasm. It catalyses the reaction phosphoenolpyruvate + UDP-N-acetyl-alpha-D-glucosamine = UDP-N-acetyl-3-O-(1-carboxyvinyl)-alpha-D-glucosamine + phosphate. It functions in the pathway cell wall biogenesis; peptidoglycan biosynthesis. Functionally, cell wall formation. Adds enolpyruvyl to UDP-N-acetylglucosamine. This Methylobacterium nodulans (strain LMG 21967 / CNCM I-2342 / ORS 2060) protein is UDP-N-acetylglucosamine 1-carboxyvinyltransferase.